The following is a 250-amino-acid chain: 2,3-bisphosphoglycerate-dependent phosphoglycerate mutase (250 aa).

Substrate contacts are provided by residues 8 to 15 (RHGESKWN), 21 to 22 (TG), Arg60, 87 to 90 (ERHY), Lys98, 114 to 115 (RR), and 183 to 184 (GN). The Tele-phosphohistidine intermediate role is filled by His9. The active-site Proton donor/acceptor is the Glu87.

Belongs to the phosphoglycerate mutase family. BPG-dependent PGAM subfamily.

It carries out the reaction (2R)-2-phosphoglycerate = (2R)-3-phosphoglycerate. It participates in carbohydrate degradation; glycolysis; pyruvate from D-glyceraldehyde 3-phosphate: step 3/5. Functionally, catalyzes the interconversion of 2-phosphoglycerate and 3-phosphoglycerate. This Borrelia recurrentis (strain A1) protein is 2,3-bisphosphoglycerate-dependent phosphoglycerate mutase.